Consider the following 652-residue polypeptide: tRNA 5-methylaminomethyl-2-thiouridine biosynthesis bifunctional protein MnmC (652 aa).

Residues 1 to 235 are tRNA (mnm(5)s(2)U34)-methyltransferase; sequence MPDRLVPATL…EPALRVGEYA (235 aa). Positions 259–652 are FAD-dependent cmnm(5)s(2)U34 oxidoreductase; sequence IGAGLAGCAV…IRALRGRQIG (394 aa).

This sequence in the N-terminal section; belongs to the methyltransferase superfamily. tRNA (mnm(5)s(2)U34)-methyltransferase family. The protein in the C-terminal section; belongs to the DAO family. Requires FAD as cofactor.

The protein localises to the cytoplasm. It catalyses the reaction 5-aminomethyl-2-thiouridine(34) in tRNA + S-adenosyl-L-methionine = 5-methylaminomethyl-2-thiouridine(34) in tRNA + S-adenosyl-L-homocysteine + H(+). Functionally, catalyzes the last two steps in the biosynthesis of 5-methylaminomethyl-2-thiouridine (mnm(5)s(2)U) at the wobble position (U34) in tRNA. Catalyzes the FAD-dependent demodification of cmnm(5)s(2)U34 to nm(5)s(2)U34, followed by the transfer of a methyl group from S-adenosyl-L-methionine to nm(5)s(2)U34, to form mnm(5)s(2)U34. The sequence is that of tRNA 5-methylaminomethyl-2-thiouridine biosynthesis bifunctional protein MnmC from Burkholderia ambifaria (strain ATCC BAA-244 / DSM 16087 / CCUG 44356 / LMG 19182 / AMMD) (Burkholderia cepacia (strain AMMD)).